We begin with the raw amino-acid sequence, 164 residues long: 2-C-methyl-D-erythritol 2,4-cyclodiphosphate synthase (164 aa).

A divalent metal cation is bound by residues Asp-9 and His-11. Residues 9-11 and 35-36 each bind 4-CDP-2-C-methyl-D-erythritol 2-phosphate; these read DVH and HS. His-43 contributes to the a divalent metal cation binding site. 4-CDP-2-C-methyl-D-erythritol 2-phosphate-binding positions include 57-59, 62-66, 133-136, Phe-140, and Arg-143; these read DIG, FPDTD, and TTTE.

The protein belongs to the IspF family. Homotrimer. A divalent metal cation is required as a cofactor.

The enzyme catalyses 4-CDP-2-C-methyl-D-erythritol 2-phosphate = 2-C-methyl-D-erythritol 2,4-cyclic diphosphate + CMP. It participates in isoprenoid biosynthesis; isopentenyl diphosphate biosynthesis via DXP pathway; isopentenyl diphosphate from 1-deoxy-D-xylulose 5-phosphate: step 4/6. Involved in the biosynthesis of isopentenyl diphosphate (IPP) and dimethylallyl diphosphate (DMAPP), two major building blocks of isoprenoid compounds. Catalyzes the conversion of 4-diphosphocytidyl-2-C-methyl-D-erythritol 2-phosphate (CDP-ME2P) to 2-C-methyl-D-erythritol 2,4-cyclodiphosphate (ME-CPP) with a corresponding release of cytidine 5-monophosphate (CMP). The sequence is that of 2-C-methyl-D-erythritol 2,4-cyclodiphosphate synthase from Syntrophotalea carbinolica (strain DSM 2380 / NBRC 103641 / GraBd1) (Pelobacter carbinolicus).